Reading from the N-terminus, the 496-residue chain is Putative ammonium transporter 1 member 5 (496 aa).

11 consecutive transmembrane segments (helical) span residues 50 to 70, 85 to 105, 131 to 151, 156 to 176, 202 to 222, 246 to 266, 284 to 306, 314 to 334, 336 to 356, 369 to 389, and 422 to 442; these read LLFS…LCAG, VLDA…FAFG, FFLY…GSIA, FVAY…VVSH, FAGS…GALI, LVVL…PGSF, GIGR…TLFG, WNVT…TAGC, VVDP…LIGC, LEAA…VGLF, and LVQI…LFFI. Residue serine 485 is modified to Phosphoserine.

This sequence belongs to the ammonia transporter channel (TC 1.A.11.2) family.

The protein localises to the membrane. In terms of biological role, involved in ammonium transport. The polypeptide is Putative ammonium transporter 1 member 5 (AMT1-5) (Arabidopsis thaliana (Mouse-ear cress)).